We begin with the raw amino-acid sequence, 526 residues long: tRNA-2-methylthio-N(6)-dimethylallyladenosine synthase (526 aa).

The segment at 1 to 24 (MTQQLNHAKVNQHPGQATLPETAE) is disordered. The MTTase N-terminal domain maps to 28 to 144 (RTYEVKTYGC…LPTLLQRAEH (117 aa)). Cysteine 37, cysteine 73, cysteine 107, cysteine 181, cysteine 185, and cysteine 188 together coordinate [4Fe-4S] cluster. Positions 167–403 (RESAYAGWVS…MVVQEQVCEE (237 aa)) constitute a Radical SAM core domain. The TRAM domain maps to 406–477 (QKLIGTTVEL…PFFLIADSGV (72 aa)).

The protein belongs to the methylthiotransferase family. MiaB subfamily. Monomer. [4Fe-4S] cluster serves as cofactor.

Its subcellular location is the cytoplasm. It carries out the reaction N(6)-dimethylallyladenosine(37) in tRNA + (sulfur carrier)-SH + AH2 + 2 S-adenosyl-L-methionine = 2-methylsulfanyl-N(6)-dimethylallyladenosine(37) in tRNA + (sulfur carrier)-H + 5'-deoxyadenosine + L-methionine + A + S-adenosyl-L-homocysteine + 2 H(+). Its function is as follows. Catalyzes the methylthiolation of N6-(dimethylallyl)adenosine (i(6)A), leading to the formation of 2-methylthio-N6-(dimethylallyl)adenosine (ms(2)i(6)A) at position 37 in tRNAs that read codons beginning with uridine. The chain is tRNA-2-methylthio-N(6)-dimethylallyladenosine synthase from Corynebacterium glutamicum (strain R).